The primary structure comprises 788 residues: Protein translocase subunit SecA (788 aa).

Residues Gln-85, 103–107, and Asp-494 each bind ATP; that span reads GEGKT.

This sequence belongs to the SecA family. Monomer and homodimer. Part of the essential Sec protein translocation apparatus which comprises SecA, SecYEG and auxiliary proteins SecDF. Other proteins may also be involved.

It is found in the cell membrane. The protein localises to the cytoplasm. The enzyme catalyses ATP + H2O + cellular proteinSide 1 = ADP + phosphate + cellular proteinSide 2.. Part of the Sec protein translocase complex. Interacts with the SecYEG preprotein conducting channel. Has a central role in coupling the hydrolysis of ATP to the transfer of proteins into and across the cell membrane, serving as an ATP-driven molecular motor driving the stepwise translocation of polypeptide chains across the membrane. In Oenococcus oeni (strain ATCC BAA-331 / PSU-1), this protein is Protein translocase subunit SecA.